Reading from the N-terminus, the 678-residue chain is Zinc finger protein 334 (678 aa).

The KRAB domain occupies valine 8–glutamate 79. C2H2-type zinc fingers lie at residues asparagine 235–histidine 257, tyrosine 263–histidine 285, tyrosine 291–histidine 313, tyrosine 319–histidine 341, tyrosine 347–histidine 369, asparagine 375–histidine 397, tyrosine 403–histidine 425, tyrosine 431–histidine 453, tyrosine 459–histidine 481, tyrosine 542–histidine 564, tyrosine 570–histidine 592, tyrosine 598–histidine 620, tyrosine 626–histidine 648, and tyrosine 654–histidine 676.

Belongs to the krueppel C2H2-type zinc-finger protein family.

It localises to the nucleus. Its function is as follows. May be involved in transcriptional regulation. This chain is Zinc finger protein 334 (ZNF334), found in Pongo abelii (Sumatran orangutan).